We begin with the raw amino-acid sequence, 1571 residues long: Disco-interacting protein 2 homolog A (1571 aa).

The 119-residue stretch at 9-127 (EAAPLPAEVR…KRRSVLVHSS (119 aa)) folds into the DMAP1-binding domain. Residues 60–203 (LQAENRIPGP…APSAAATPGA (144 aa)) form a disordered region. A compositionally biased stretch (basic and acidic residues) spans 86-98 (ASRDERFRSDVHT). At serine 94 the chain carries Phosphoserine. 2 stretches are compositionally biased toward polar residues: residues 127–139 (SVET…TSSA) and 152–162 (LTSTPLQSHSS). Threonine 132 and threonine 155 each carry phosphothreonine. Positions 174 to 203 (SSTSSSASSTSSHPGGRPTTAPSAAATPGA) are enriched in low complexity. Short sequence motifs (PXXP motif; required for interaction with CTTN) lie at residues 283–286 (PKRP) and 307–310 (PNQP). Residues 302–327 (VQQPDPNQPKPEGSETSVLRGEPLTA) form a disordered region.

This sequence belongs to the DIP2 family. As to quaternary structure, interacts with FSTL1; DIP2A may act as a cell surface receptor for FSTL1. Interacts (via N-terminus) with CTTN (via SH3 domain); the interaction promotes acetylation of CTTN and is required for proper synaptic transmission. Interacts with SHANK3. In terms of tissue distribution, low expression in all tissues tested.

Its subcellular location is the cell membrane. The protein localises to the mitochondrion. It localises to the cell projection. The protein resides in the dendritic spine. The enzyme catalyses acetate + ATP + CoA = acetyl-CoA + AMP + diphosphate. In terms of biological role, catalyzes the de novo synthesis of acetyl-CoA in vitro. Promotes acetylation of CTTN, possibly by providing the acetyl donor, ensuring correct dendritic spine morphology and synaptic transmission. Binds to follistatin-related protein FSTL1 and may act as a cell surface receptor for FSTL1, contributing to AKT activation and subsequent FSTL1-induced survival and function of endothelial cells and cardiac myocytes. The chain is Disco-interacting protein 2 homolog A (DIP2A) from Homo sapiens (Human).